The following is a 413-amino-acid chain: Serine/threonine transporter SstT (413 aa).

The next 8 helical transmembrane spans lie at 19–39 (IFIGLILGLLVALVTPTLQNV), 61–81 (AVAPILIFVLVMAAIANKKIG), 89–109 (IIVLYLLGTFLAALSAVIAGF), 148–168 (ALFKANFVGVLAWSIGLGLAL), 189–209 (IVYVIIAFAPIGVFGLVSETL), 223–243 (LLAVLVGTMLFVAFVVNPILV), 297–317 (IPLGATINMAGAAITVTILTL), and 325–345 (IQISFFSALLLSVVASICACG).

This sequence belongs to the dicarboxylate/amino acid:cation symporter (DAACS) (TC 2.A.23) family.

It localises to the cell inner membrane. The enzyme catalyses L-serine(in) + Na(+)(in) = L-serine(out) + Na(+)(out). The catalysed reaction is L-threonine(in) + Na(+)(in) = L-threonine(out) + Na(+)(out). Functionally, involved in the import of serine and threonine into the cell, with the concomitant import of sodium (symport system). This Pasteurella multocida (strain Pm70) protein is Serine/threonine transporter SstT.